The chain runs to 439 residues: Methylenetetrahydrofolate--tRNA-(uracil-5-)-methyltransferase TrmFO (439 aa).

9 to 14 (GAGLAG) contributes to the FAD binding site.

The protein belongs to the MnmG family. TrmFO subfamily. It depends on FAD as a cofactor.

The protein localises to the cytoplasm. It catalyses the reaction uridine(54) in tRNA + (6R)-5,10-methylene-5,6,7,8-tetrahydrofolate + NADH + H(+) = 5-methyluridine(54) in tRNA + (6S)-5,6,7,8-tetrahydrofolate + NAD(+). It carries out the reaction uridine(54) in tRNA + (6R)-5,10-methylene-5,6,7,8-tetrahydrofolate + NADPH + H(+) = 5-methyluridine(54) in tRNA + (6S)-5,6,7,8-tetrahydrofolate + NADP(+). In terms of biological role, catalyzes the folate-dependent formation of 5-methyl-uridine at position 54 (M-5-U54) in all tRNAs. The chain is Methylenetetrahydrofolate--tRNA-(uracil-5-)-methyltransferase TrmFO from Desulforudis audaxviator (strain MP104C).